Reading from the N-terminus, the 490-residue chain is Betaine aldehyde dehydrogenase (490 aa).

K(+)-binding residues include threonine 26, isoleucine 27, and aspartate 93. NAD(+) is bound at residue 150–152 (GAW). The active-site Charge relay system is the lysine 162. 176 to 179 (KPSE) lines the NAD(+) pocket. A K(+)-binding site is contributed by valine 180. 230–233 (GVAS) serves as a coordination point for NAD(+). Leucine 246 lines the K(+) pocket. Residue glutamate 252 is the Proton acceptor of the active site. Glycine 254, cysteine 286, and glutamate 387 together coordinate NAD(+). The active-site Nucleophile is the cysteine 286. Position 286 is a cysteine sulfenic acid (-SOH) (cysteine 286). Residues lysine 457 and glycine 460 each contribute to the K(+) site. Glutamate 464 acts as the Charge relay system in catalysis.

The protein belongs to the aldehyde dehydrogenase family. Dimer of dimers. The cofactor is K(+).

It carries out the reaction betaine aldehyde + NAD(+) + H2O = glycine betaine + NADH + 2 H(+). Its pathway is amine and polyamine biosynthesis; betaine biosynthesis via choline pathway; betaine from betaine aldehyde: step 1/1. Functionally, involved in the biosynthesis of the osmoprotectant glycine betaine. Catalyzes the irreversible oxidation of betaine aldehyde to the corresponding acid. This is Betaine aldehyde dehydrogenase from Escherichia coli (strain 55989 / EAEC).